Consider the following 182-residue polypeptide: Epididymal-specific lipocalin-10 (182 aa).

The first 19 residues, 1-19, serve as a signal peptide directing secretion; sequence MKLEMALSIALALAVVSWT. Asparagine 31 and asparagine 144 each carry an N-linked (GlcNAc...) asparagine glycan. Residues cysteine 85 and cysteine 176 are joined by a disulfide bond. Lysine 165 is modified (N6-acetyllysine).

Belongs to the calycin superfamily. Lipocalin family. In terms of tissue distribution, expressed in epididymis.

The protein resides in the secreted. In terms of biological role, may play a role in male fertility. May act as a retinoid carrier protein within the epididymis. The chain is Epididymal-specific lipocalin-10 (Lcn10) from Mus musculus (Mouse).